The following is a 534-amino-acid chain: NAD(P)H-quinone oxidoreductase chain 4 1 (534 aa).

The next 14 membrane-spanning stretches (helical) occupy residues isoleucine 6–isoleucine 26, isoleucine 34–tryptophan 54, leucine 87–tryptophan 107, proline 113–valine 133, leucine 136–isoleucine 156, phenylalanine 169–phenylalanine 189, alanine 209–phenylalanine 229, serine 243–isoleucine 263, phenylalanine 277–phenylalanine 297, isoleucine 311–glycine 331, alanine 332–valine 352, phenylalanine 376–valine 396, isoleucine 418–leucine 438, and isoleucine 464–alanine 484.

Belongs to the complex I subunit 4 family.

The protein localises to the cellular thylakoid membrane. The catalysed reaction is a plastoquinone + NADH + (n+1) H(+)(in) = a plastoquinol + NAD(+) + n H(+)(out). It catalyses the reaction a plastoquinone + NADPH + (n+1) H(+)(in) = a plastoquinol + NADP(+) + n H(+)(out). In terms of biological role, NDH-1 shuttles electrons from NAD(P)H, via FMN and iron-sulfur (Fe-S) centers, to quinones in the respiratory chain. The immediate electron acceptor for the enzyme in this species is believed to be plastoquinone. Couples the redox reaction to proton translocation (for every two electrons transferred, four hydrogen ions are translocated across the cytoplasmic membrane), and thus conserves the redox energy in a proton gradient. The polypeptide is NAD(P)H-quinone oxidoreductase chain 4 1 (Picosynechococcus sp. (strain ATCC 27264 / PCC 7002 / PR-6) (Agmenellum quadruplicatum)).